The chain runs to 280 residues: Phosphonates import ATP-binding protein PhnC 1 (280 aa).

Residues 2–246 form the ABC transporter domain; that stretch reads LRIENLDKRY…VLTRIYGEED (245 aa). 35–42 provides a ligand contact to ATP; it reads GPSGAGKS. The interval 247-266 is disordered; that stretch reads WSKTSDEDADSVDAPPRAAD.

It belongs to the ABC transporter superfamily. Phosphonates importer (TC 3.A.1.9.1) family. As to quaternary structure, the complex is composed of two ATP-binding proteins (PhnC), two transmembrane proteins (PhnE) and a solute-binding protein (PhnD).

The protein resides in the cell inner membrane. The enzyme catalyses phosphonate(out) + ATP + H2O = phosphonate(in) + ADP + phosphate + H(+). Its function is as follows. Part of the ABC transporter complex PhnCDE involved in phosphonates import. Responsible for energy coupling to the transport system. This chain is Phosphonates import ATP-binding protein PhnC 1, found in Rhodopseudomonas palustris (strain HaA2).